A 570-amino-acid polypeptide reads, in one-letter code: Peptidyl-prolyl cis-trans isomerase FKBP9 (570 aa).

Residues 1–24 form the signal peptide; sequence MAFRGWRPPPPPLLLLLLWVTGQA. 4 PPIase FKBP-type domains span residues 54–142, 166–254, 278–365, and 389–477; these read GDFV…MDIW, SDFV…LDLH, GDFL…IDFH, and GDYL…LELV. 4 N-linked (GlcNAc...) asparagine glycosylation sites follow: Asn-174, Asn-286, Asn-302, and Asn-397. 2 EF-hand domains span residues 488-523 and 533-568; these read WNGE…QVAS and DAEL…AKHD. The Ca(2+) site is built by Asp-501, Asp-503, Asn-505, Glu-507, Glu-512, Asp-546, Asn-548, Asp-550, Lys-552, and Glu-557. A Prevents secretion from ER motif is present at residues 567 to 570; sequence HDEL.

Post-translationally, phosphorylated.

The protein resides in the endoplasmic reticulum. The enzyme catalyses [protein]-peptidylproline (omega=180) = [protein]-peptidylproline (omega=0). Inhibited by FK506. PPIases accelerate the folding of proteins during protein synthesis. The chain is Peptidyl-prolyl cis-trans isomerase FKBP9 (FKBP9) from Homo sapiens (Human).